The primary structure comprises 64 residues: Putative neurotoxin-H (64 aa).

The N-terminal stretch at 1-19 (MYATVTVTVLLLISSGIFC) is a signal peptide. Cystine bridges form between Cys-25–Cys-45, Cys-32–Cys-54, and Cys-36–Cys-56.

In terms of tissue distribution, expressed by the venom gland.

Its subcellular location is the secreted. This is Putative neurotoxin-H from Lychas mucronatus (Chinese swimming scorpion).